Consider the following 369-residue polypeptide: MVLLKSLVVASLAAAVAAKSAVLDLIPSNFDDVVLKSGKPTLVEFFAPWCGHCKNLAPVYEELATALEYAKDKVQIAKVDADAERALGKRFGVQGFPTLKFFDGKSEQPVDYKGGRDLDSLSNFIAEKTGVKARKKGSAPSLVNILNDATIKGAIGGDKNVLVAFTAPWCGHCKNLAPTWEKLAATFASDPEITIAKVDADAPTGKKSAAEYGVSGFPTIKFFPKGSTTPEDYNGGRSEADLVKFLNEKAGTHRTPGGGLDTVAGTIAALDEIVAKYTGGASLAEVAEEAKEAVKSLKNSAELKYADYYLRVLDKLSKSEGYATKEFARLEGILKKGGLAPAKVDELTVKVNVLRKFVEKAAEEAKEEL.

The N-terminal stretch at Met1–Ala18 is a signal peptide. Thioredoxin domains follow at residues Lys19–Gly130 and Val131–Gly251. Catalysis depends on nucleophile residues Cys50, Cys53, Cys170, and Cys173. Disulfide bonds link Cys50/Cys53 and Cys170/Cys173. A Prevents secretion from ER motif is present at residues Lys366–Leu369.

This sequence belongs to the protein disulfide isomerase family.

Its subcellular location is the endoplasmic reticulum lumen. The catalysed reaction is Catalyzes the rearrangement of -S-S- bonds in proteins.. In Neurospora crassa (strain ATCC 24698 / 74-OR23-1A / CBS 708.71 / DSM 1257 / FGSC 987), this protein is Protein disulfide-isomerase erp38 (erp38).